A 401-amino-acid chain; its full sequence is Probable thioesterase FGSG_00047 (401 aa).

The interval 379–401 (AREMDQRKRQKDFTHTTIHDKNS) is disordered.

It belongs to the AMT4 thioesterase family.

It participates in mycotoxin biosynthesis. Probable thioesterase; part of the gene cluster that mediates the biosynthesis of gramillins A and B, bicyclic lipopeptides that induce cell death in maize leaves but not in wheat leaves. The nonribosomal peptide synthetase GRA1 incorporates respectively a glutamic adic (Glu), a leucine (Leu), a serine (Ser), a hydroxyglutamine (HOGln), a 2-amino decanoic acid, and 2 cysteins (CysB and CysA). The biosynthesis of 2-amino decanoic acid incorporated in gramillins could be initiated by a fatty acid synthase composed of the alpha and beta subunits FGSG_00036 and FGSG_11656. The cytochrome P450 monooxygenase FGSG_15680 could hydroxylate the fatty acid chain. Subsequent oxidation to the ketone by the oxidoreductase FGSG_00048 and transamination by aminotransferase FGSG_00049 could form 2-amino-decanoic acid. On the other hand, FGSG_15680 could also be responsible for the HO-modified glutamine at the gamma-position. Whether hydroxylation occurs on the fully assembled product or on the Gln residue prior to assembly into the gramillins requires further proof. The thioredoxin FGSG_00043 could also be required for the disulfide-bond formation between CysA and CysB. The specific involvement of the remaining proteins from the cluster is more difficult to discern, but could have broader regulatory (FGSG_00040 and FGSG_11657) or enzymatic functions (FGSG_00044 and FGSG_00045). The final C-domain of GRA1 does not possess the expected sequence of a termination CT domain, often implicated in macrocyclization and release of a cyclopeptidein fungal NRPs; and the thioesterase FGSG_00047 may act in concert with the terminal C-domain of GRA1 to catalyze the formation of the macrocyclic anhydride and release of the products. This is Probable thioesterase FGSG_00047 from Gibberella zeae (strain ATCC MYA-4620 / CBS 123657 / FGSC 9075 / NRRL 31084 / PH-1) (Wheat head blight fungus).